A 116-amino-acid chain; its full sequence is Large ribosomal subunit protein bL20 (116 aa).

This sequence belongs to the bacterial ribosomal protein bL20 family.

Functionally, binds directly to 23S ribosomal RNA and is necessary for the in vitro assembly process of the 50S ribosomal subunit. It is not involved in the protein synthesizing functions of that subunit. This is Large ribosomal subunit protein bL20 from Helicobacter pylori (strain Shi470).